We begin with the raw amino-acid sequence, 353 residues long: Heat-inducible transcription repressor HrcA (353 aa).

It belongs to the HrcA family.

Its function is as follows. Negative regulator of class I heat shock genes (grpE-dnaK-dnaJ and groELS operons). Prevents heat-shock induction of these operons. This Synechococcus elongatus (strain ATCC 33912 / PCC 7942 / FACHB-805) (Anacystis nidulans R2) protein is Heat-inducible transcription repressor HrcA.